Consider the following 299-residue polypeptide: Small ribosomal subunit protein uS2 (299 aa).

The segment covering 259–291 has biased composition (low complexity); it reads AAASAAGPTSWEADGADWAASSAPAAAGESWAE. Positions 259-299 are disordered; that stretch reads AAASAAGPTSWEADGADWAASSAPAAAGESWAETQPAEGKW.

This sequence belongs to the universal ribosomal protein uS2 family. In terms of assembly, component of the small ribosomal subunit. Mature ribosomes consist of a small (40S) and a large (60S) subunit. The 40S subunit contains about 33 different proteins and 1 molecule of RNA (18S). The 60S subunit contains about 49 different proteins and 3 molecules of RNA (25S, 5.8S and 5S). Interacts with rps21.

Its subcellular location is the cytoplasm. Required for the assembly and/or stability of the 40S ribosomal subunit. Required for the processing of the 20S rRNA-precursor to mature 18S rRNA in a late step of the maturation of 40S ribosomal subunits. The protein is Small ribosomal subunit protein uS2 (rps0) of Aspergillus flavus (strain ATCC 200026 / FGSC A1120 / IAM 13836 / NRRL 3357 / JCM 12722 / SRRC 167).